A 262-amino-acid chain; its full sequence is Transcription factor bHLH81 (262 aa).

Positions 1 to 29 (MQPTSVGSSGGGDDGGGRGGGGGLSRSGL) are disordered. Positions 8–25 (SSGGGDDGGGRGGGGGLS) are enriched in gly residues. Residues 190–240 (CATHPRSIAERVRRTRISDRIRKLQELVPNMDKQTNTADMLEEAVEYVKVL) enclose the bHLH domain.

As to quaternary structure, homodimer. Expressed in flowers.

The protein localises to the nucleus. This chain is Transcription factor bHLH81 (BHLH81), found in Arabidopsis thaliana (Mouse-ear cress).